The following is a 185-amino-acid chain: Ribose 1,5-bisphosphate phosphokinase PhnN (185 aa).

ATP is bound at residue 10-17 (GPSGSGKD).

The protein belongs to the ribose 1,5-bisphosphokinase family.

The enzyme catalyses alpha-D-ribose 1,5-bisphosphate + ATP = 5-phospho-alpha-D-ribose 1-diphosphate + ADP. Its pathway is metabolic intermediate biosynthesis; 5-phospho-alpha-D-ribose 1-diphosphate biosynthesis; 5-phospho-alpha-D-ribose 1-diphosphate from D-ribose 5-phosphate (route II): step 3/3. Functionally, catalyzes the phosphorylation of ribose 1,5-bisphosphate to 5-phospho-D-ribosyl alpha-1-diphosphate (PRPP). Accepts ATP but not GTP as a phosphoryl donor, and uses ribose 1,5-bisphosphate but not ribose, ribose 1-phosphate, or ribose 5-phosphate as a phosphoryl acceptor. This chain is Ribose 1,5-bisphosphate phosphokinase PhnN (phnN), found in Escherichia coli (strain K12).